A 383-amino-acid chain; its full sequence is MKPQFRNTVERMYRDTFFYNFNNRPILSRRNTVWLCYEVKTRGPSMPTWDAKIFRGQVYSKAKYHPEMRFLHWFRKWRQLHRDQEYEVTWYVSWSPCTGCANSVATFLAEDPKVTLTIFVARLYYFWKPDYQEALRVLCQKRGSPHATMKIMNYNEFQHCWNKFVRGRREPFEPWENLPKHYTLLHATLGELLRHLMDPGTFTSNFYNKPWVSGQHETYLCYKVERLHNGTWVPLNQHRGFLRNQAPDIHGFPKGRHAELCFLDLIPFWKLDGQQYRVTCFTSWSPCFSCAQEMAKFISNNEHVSLCIFAARIYDDQGRCQEGLRTLHRDGAKIAMMNYSEFEYCWDTFVDRQGRPFQPWDGLDEHSQDLSGRLRAILQNQGN.

The essential for cytoplasmic localization stretch occupies residues 1 to 60; the sequence is MKPQFRNTVERMYRDTFFYNFNNRPILSRRNTVWLCYEVKTRGPSMPTWDAKIFRGQVYS. CMP/dCMP-type deaminase domains are found at residues 29 to 138 and 214 to 327; these read RRNT…LRVL and GQHE…LRTL. Threonine 32 carries the post-translational modification Phosphothreonine; by PKA. Residues histidine 65, cysteine 97, and cysteine 100 each coordinate Zn(2+). Positions 209-335 are necessary for homooligomerization; that stretch reads KPWVSGQHET…TLHRDGAKIA (127 aa). An interaction with DNA region spans residues 213-215; that stretch reads SGQ. Threonine 218 is subject to Phosphothreonine; by PKA and CAMK2. Histidine 257 contacts Zn(2+). The Proton donor role is filled by glutamate 259. Positions 287 and 290 each coordinate Zn(2+). The interval 312–319 is interaction with DNA; sequence RIYDDQGR.

Belongs to the cytidine and deoxycytidylate deaminase family. In terms of assembly, homodimer. It depends on Zn(2+) as a cofactor.

It is found in the cytoplasm. It localises to the nucleus. The protein resides in the P-body. It catalyses the reaction a 2'-deoxycytidine in single-stranded DNA + H2O + H(+) = a 2'-deoxyuridine in single-stranded DNA + NH4(+). Functionally, DNA deaminase (cytidine deaminase) which acts as an inhibitor of retrovirus replication and retrotransposon mobility. After the penetration of retroviral nucleocapsids into target cells of infection and the initiation of reverse transcription, it can induce the conversion of cytosine to uracil in the minus-sense single-strand viral DNA, leading to G-to-A hypermutations in the subsequent plus-strand viral DNA. The resultant detrimental levels of mutations in the proviral genome, along with a deamination-independent mechanism that works prior to the proviral integration, together exert efficient antiretroviral effects in infected target cells. Selectively targets single-stranded DNA and does not deaminate double-stranded DNA or single- or double-stranded RNA. In Papio anubis (Olive baboon), this protein is DNA dC-&gt;dU-editing enzyme APOBEC-3G (APOBEC3G).